The sequence spans 293 residues: 4-hydroxy-tetrahydrodipicolinate synthase (293 aa).

T46 is a binding site for pyruvate. Y134 (proton donor/acceptor) is an active-site residue. Residue K162 is the Schiff-base intermediate with substrate of the active site. Residue I204 participates in pyruvate binding.

It belongs to the DapA family. As to quaternary structure, homotetramer; dimer of dimers.

The protein localises to the cytoplasm. It catalyses the reaction L-aspartate 4-semialdehyde + pyruvate = (2S,4S)-4-hydroxy-2,3,4,5-tetrahydrodipicolinate + H2O + H(+). It functions in the pathway amino-acid biosynthesis; L-lysine biosynthesis via DAP pathway; (S)-tetrahydrodipicolinate from L-aspartate: step 3/4. Functionally, catalyzes the condensation of (S)-aspartate-beta-semialdehyde [(S)-ASA] and pyruvate to 4-hydroxy-tetrahydrodipicolinate (HTPA). This Bdellovibrio bacteriovorus (strain ATCC 15356 / DSM 50701 / NCIMB 9529 / HD100) protein is 4-hydroxy-tetrahydrodipicolinate synthase.